Consider the following 1615-residue polypeptide: Ras-responsive element-binding protein 1 (1615 aa).

The tract at residues 1-44 (MMSAVMNVGKIAENGGTSQTVKSPSKSPAPNRIGRRNQETKEEK) is disordered. The span at 15–28 (GGTSQTVKSPSKSP) shows a compositional bias: polar residues. C2H2-type zinc fingers lie at residues 47 to 69 (YTCP…IRQH), 78 to 100 (HSCS…MLVH), and 106 to 128 (YKCS…MKIH). Positions 127–169 (IHEKDPNSTASTTPPSPLKAKRLSSKRKFSQDAEMDREERTPA) are disordered. Over residues 145–154 (KAKRLSSKRK) the composition is skewed to basic residues. C2H2-type zinc fingers lie at residues 189 to 211 (YHCP…METH), 216 to 239 (LRCD…AVIH), and 297 to 319 (FICE…TETH). Positions 511–556 (SAQQASPGCISPSLPPPPLRLIKNSVETSSNSHLSQPGAKSSPSSQ) are disordered. A compositionally biased stretch (polar residues) spans 535 to 549 (SVETSSNSHLSQPGA). 4 C2H2-type zinc fingers span residues 622–644 (YPCR…IRSH), 650–672 (YQCN…LRTH), 732–754 (TVCK…MRTH), and 763–788 (FECK…QHLH). 3 disordered regions span residues 1025–1044 (AADA…KSGN), 1058–1104 (DSNL…VDLE), and 1123–1162 (KFSP…KRNT). Positions 1026–1036 (ADASPKAASSS) are enriched in low complexity. A compositionally biased stretch (basic residues) spans 1082–1095 (TKKRGRKKGTKNKP). A compositionally biased stretch (polar residues) spans 1123 to 1132 (KFSPFLQSTD). A C2H2-type 11 zinc finger spans residues 1170 to 1192 (ITCPYCPRVFSWASSLQRHMLTH). Disordered stretches follow at residues 1214–1269 (CEKE…KSLD) and 1313–1418 (LSRH…DKRK). Residues 1242–1262 (PAEEDAEEKADEYEEGPEEDS) are compositionally biased toward acidic residues. The C2H2-type 12 zinc finger occupies 1298–1320 (HACDVCGKTFKFAGALSRHKKAH). Basic and acidic residues-rich tracts occupy residues 1321–1339 (IRED…KSIQ) and 1388–1414 (GTER…TAKA). C2H2-type zinc fingers lie at residues 1419–1441 (KVCT…MRSH) and 1447–1469 (YKCQ…QRIH). Residues 1464–1477 (RHQRIHQKVKNTRN) show a composition bias toward basic residues. The tract at residues 1464-1585 (RHQRIHQKVK…SELERPSGFI (122 aa)) is disordered. 2 stretches are compositionally biased toward basic and acidic residues: residues 1478–1493 (HGKE…RCGE) and 1566–1580 (PAKD…ELER).

The protein belongs to the krueppel C2H2-type zinc-finger protein family. Broadly expressed, except in brain.

It localises to the nucleus. Functionally, transcription factor that binds specifically to the RAS-responsive elements (RRE) of gene promoters. This is Ras-responsive element-binding protein 1 (RREB1) from Gallus gallus (Chicken).